A 485-amino-acid chain; its full sequence is Serine/threonine-protein kinase 4 (485 aa).

A Protein kinase domain is found at 30–281 (FDVLEKLGEG…ATELLQHPFI (252 aa)). Residues 36–44 (LGEGSYGSV) and lysine 59 each bind ATP. The Proton acceptor role is filled by aspartate 149. Residue threonine 183 is modified to Phosphothreonine; by autocatalysis. A coiled-coil region spans residues 287–313 (ESILRHLINEAQDAKLKRTELKQREVE). The region spanning 431–478 (YSFLKDWSVTELQLRLNSLDPMMEQEIEEIHHKYQAKRQPILEAIESK) is the SARAH domain.

It belongs to the protein kinase superfamily. STE Ser/Thr protein kinase family. STE20 subfamily. As to quaternary structure, homodimer; mediated via the coiled-coil region. Requires Mg(2+) as cofactor. Post-translationally, autophosphorylated on Thr-183. Proteolytically cleaved by caspase-3 during apoptosis at Asp-326 resulting in a 37 kDa form. Proteolytic cleavage results in kinase activation and nuclear translocation of the truncated form (MST1/N).

The protein localises to the cytoplasm. It is found in the nucleus. It catalyses the reaction L-seryl-[protein] + ATP = O-phospho-L-seryl-[protein] + ADP + H(+). The enzyme catalyses L-threonyl-[protein] + ATP = O-phospho-L-threonyl-[protein] + ADP + H(+). With respect to regulation, the C-terminal non-catalytic region inhibits the kinase activity, the enzyme is activated by caspase-cleavage. Homodimerization and autophosphorylation of Thr-183 is also required for full activation. Its function is as follows. Stress-activated, pro-apoptotic kinase which, following caspase-cleavage, enters the nucleus and induces chromatin condensation followed by internucleosomal DNA fragmentation. Key component of the Hippo signaling pathway which plays a pivotal role in organ size control and tumor suppression by restricting proliferation and promoting apoptosis. The core of this pathway is composed of a kinase cascade wherein stk3/mst2 and stk4/mst1, in complex with its regulatory protein sav1, phosphorylates and activates lats1/2 in complex with its regulatory protein mob1, which in turn phosphorylates and inactivates yap1 oncoprotein and wwtr1/taz. Phosphorylation of yap1 by lats2 inhibits its translocation into the nucleus to regulate cellular genes important for cell proliferation, cell death, and cell migration. Phosphorylates 'Ser-14' of histone H2B (H2BS14ph) during apoptosis. The polypeptide is Serine/threonine-protein kinase 4 (stk4) (Xenopus tropicalis (Western clawed frog)).